Reading from the N-terminus, the 644-residue chain is Probable potassium transport system protein Kup 2 (644 aa).

Residues 1 to 21 form a disordered region; the sequence is MSSDAAAVADRDGSSPGHGGH. The next 12 helical transmembrane spans lie at 26–46, 69–89, 120–140, 155–175, 183–203, 231–251, 265–285, 312–332, 360–380, 390–410, 419–439, and 444–464; these read LGAM…TSPL, VLSL…VAII, IILL…ITPA, AGFA…LFMI, VGML…VLGT, LAFL…ALYA, WLVF…AMIL, LVIL…TGAF, IYIP…VMSF, YGIA…VVLI, LAAP…GANL, and DGGW…TTWG.

Belongs to the HAK/KUP transporter (TC 2.A.72) family.

The protein resides in the cell inner membrane. The enzyme catalyses K(+)(in) + H(+)(in) = K(+)(out) + H(+)(out). Transport of potassium into the cell. Likely operates as a K(+):H(+) symporter. In Rhizorhabdus wittichii (strain DSM 6014 / CCUG 31198 / JCM 15750 / NBRC 105917 / EY 4224 / RW1) (Sphingomonas wittichii), this protein is Probable potassium transport system protein Kup 2.